Consider the following 104-residue polypeptide: Large ribosomal subunit protein bL21 (104 aa).

The protein belongs to the bacterial ribosomal protein bL21 family. In terms of assembly, part of the 50S ribosomal subunit. Contacts protein L20.

In terms of biological role, this protein binds to 23S rRNA in the presence of protein L20. In Agrobacterium fabrum (strain C58 / ATCC 33970) (Agrobacterium tumefaciens (strain C58)), this protein is Large ribosomal subunit protein bL21.